The sequence spans 282 residues: Bis(5'-nucleosyl)-tetraphosphatase, symmetrical (282 aa).

The protein belongs to the Ap4A hydrolase family.

It catalyses the reaction P(1),P(4)-bis(5'-adenosyl) tetraphosphate + H2O = 2 ADP + 2 H(+). Functionally, hydrolyzes diadenosine 5',5'''-P1,P4-tetraphosphate to yield ADP. This chain is Bis(5'-nucleosyl)-tetraphosphatase, symmetrical, found in Sodalis glossinidius (strain morsitans).